Here is a 281-residue protein sequence, read N- to C-terminus: NADPH-dependent 7-cyano-7-deazaguanine reductase (281 aa).

87 to 89 is a binding site for substrate; it reads IES. An NADPH-binding site is contributed by 89–90; sequence SK. The active-site Thioimide intermediate is the Cys188. Catalysis depends on Asp195, which acts as the Proton donor. 227 to 228 contributes to the substrate binding site; that stretch reads HE. NADPH is bound at residue 256 to 257; it reads RG. A disordered region spans residues 261–281; the sequence is INPYRSTEQAKPDHNHRMARQ. Positions 268-281 are enriched in basic and acidic residues; that stretch reads EQAKPDHNHRMARQ.

Belongs to the GTP cyclohydrolase I family. QueF type 2 subfamily. In terms of assembly, homodimer.

The protein localises to the cytoplasm. The enzyme catalyses 7-aminomethyl-7-carbaguanine + 2 NADP(+) = 7-cyano-7-deazaguanine + 2 NADPH + 3 H(+). Its pathway is tRNA modification; tRNA-queuosine biosynthesis. Functionally, catalyzes the NADPH-dependent reduction of 7-cyano-7-deazaguanine (preQ0) to 7-aminomethyl-7-deazaguanine (preQ1). This Vibrio vulnificus (strain YJ016) protein is NADPH-dependent 7-cyano-7-deazaguanine reductase.